The sequence spans 98 residues: Putative pterin-4-alpha-carbinolamine dehydratase (98 aa).

It belongs to the pterin-4-alpha-carbinolamine dehydratase family.

It carries out the reaction (4aS,6R)-4a-hydroxy-L-erythro-5,6,7,8-tetrahydrobiopterin = (6R)-L-erythro-6,7-dihydrobiopterin + H2O. The polypeptide is Putative pterin-4-alpha-carbinolamine dehydratase (Roseobacter denitrificans (strain ATCC 33942 / OCh 114) (Erythrobacter sp. (strain OCh 114))).